The chain runs to 69 residues: Large ribosomal subunit protein uL30 (69 aa).

It belongs to the universal ribosomal protein uL30 family. As to quaternary structure, part of the 50S ribosomal subunit.

In Rhizobium etli (strain CIAT 652), this protein is Large ribosomal subunit protein uL30.